We begin with the raw amino-acid sequence, 118 residues long: Large ribosomal subunit protein bL20 (118 aa).

It belongs to the bacterial ribosomal protein bL20 family.

Binds directly to 23S ribosomal RNA and is necessary for the in vitro assembly process of the 50S ribosomal subunit. It is not involved in the protein synthesizing functions of that subunit. The chain is Large ribosomal subunit protein bL20 from Azotobacter vinelandii.